The chain runs to 338 residues: Ketol-acid reductoisomerase (NADP(+)) (338 aa).

Positions 1–181 constitute a KARI N-terminal Rossmann domain; the sequence is MNVYYDRDCD…GGGRTGIIET (181 aa). Residues 24-27, arginine 47, serine 50, serine 52, and 82-85 contribute to the NADP(+) site; these read YGSQ and DEFQ. Histidine 107 is an active-site residue. Glycine 133 is an NADP(+) binding site. One can recognise a KARI C-terminal knotted domain in the interval 182-327; that stretch reads TFKDETETDL…GNLRAMMPWI (146 aa). Mg(2+) contacts are provided by aspartate 190, glutamate 194, glutamate 226, and glutamate 230. Serine 251 lines the substrate pocket.

Belongs to the ketol-acid reductoisomerase family. Mg(2+) is required as a cofactor.

It carries out the reaction (2R)-2,3-dihydroxy-3-methylbutanoate + NADP(+) = (2S)-2-acetolactate + NADPH + H(+). The catalysed reaction is (2R,3R)-2,3-dihydroxy-3-methylpentanoate + NADP(+) = (S)-2-ethyl-2-hydroxy-3-oxobutanoate + NADPH + H(+). Its pathway is amino-acid biosynthesis; L-isoleucine biosynthesis; L-isoleucine from 2-oxobutanoate: step 2/4. It functions in the pathway amino-acid biosynthesis; L-valine biosynthesis; L-valine from pyruvate: step 2/4. Functionally, involved in the biosynthesis of branched-chain amino acids (BCAA). Catalyzes an alkyl-migration followed by a ketol-acid reduction of (S)-2-acetolactate (S2AL) to yield (R)-2,3-dihydroxy-isovalerate. In the isomerase reaction, S2AL is rearranged via a Mg-dependent methyl migration to produce 3-hydroxy-3-methyl-2-ketobutyrate (HMKB). In the reductase reaction, this 2-ketoacid undergoes a metal-dependent reduction by NADPH to yield (R)-2,3-dihydroxy-isovalerate. This is Ketol-acid reductoisomerase (NADP(+)) from Trichlorobacter lovleyi (strain ATCC BAA-1151 / DSM 17278 / SZ) (Geobacter lovleyi).